We begin with the raw amino-acid sequence, 368 residues long: E3 ubiquitin-protein ligase E3D (368 aa).

Position 2 is an N-acetylalanine (Ala2). Positions 129 to 159 match the BRAT1-like motif motif; it reads PLPSENWSALVGEWCCHPDPFANRPLHPREN. Zn(2+) is bound at residue Cys144. Residues 214-236 are interaction with UBE2C; the sequence is RPSEGSFPNIPRSQFLQSIIAQC. The tract at residues 332 to 368 is HECT-like; that stretch reads LPSATCLELLLILSRNNASLPLSLRQMNSFQVAFLKM.

As to quaternary structure, interacts with UBE2C/UbcH10 (E2 ubiquitin-conjugating enzyme). In vitro, interacts with cyclin-B. Ubiquitinated by UBCH10 (E2 ubiquitin-conjugating enzyme).

It localises to the cytoplasm. The catalysed reaction is S-ubiquitinyl-[E2 ubiquitin-conjugating enzyme]-L-cysteine + [acceptor protein]-L-lysine = [E2 ubiquitin-conjugating enzyme]-L-cysteine + N(6)-ubiquitinyl-[acceptor protein]-L-lysine.. It functions in the pathway protein modification; protein ubiquitination. In terms of biological role, E3 ubiquitin-protein ligase which accepts ubiquitin from specific E2 ubiquitin-conjugating enzymes, and transfers it to substrates, generally promoting their degradation by the proteasome. Independently of its E3 ubiquitin-protein ligase activity, acts as an inhibitor of CPSF3 endonuclease activity by blocking CPSF3 active site. The sequence is that of E3 ubiquitin-protein ligase E3D (Ube3d) from Mus musculus (Mouse).